A 181-amino-acid chain; its full sequence is Probable cobalt-precorrin-6B C(15)-methyltransferase (decarboxylating) (181 aa).

S-adenosyl-L-methionine is bound by residues threonine 16, 40–44, aspartate 61, and alanine 89; that span reads GCGSG.

This sequence belongs to the methyltransferase superfamily. Archaeal-type CbiT family.

The catalysed reaction is Co-precorrin-6B + S-adenosyl-L-methionine = Co-precorrin-7 + S-adenosyl-L-homocysteine + CO2. Its pathway is cofactor biosynthesis; adenosylcobalamin biosynthesis; cob(II)yrinate a,c-diamide from sirohydrochlorin (anaerobic route): step 8/10. Its function is as follows. Catalyzes the methylation of C-15 in cobalt-precorrin-6B followed by the decarboxylation of C-12 to form cobalt-precorrin-7. In Methanococcus maripaludis (strain C5 / ATCC BAA-1333), this protein is Probable cobalt-precorrin-6B C(15)-methyltransferase (decarboxylating).